The following is an 839-amino-acid chain: MTRSPFRRLVFGTLRRLLYLWVRSETINQSSLTLNLDRSRPVFYVLQSPSLSELAVVDAECTKAGLPRPVLPVSVGPLMEPAAFFYLTPEPDWLGRQDKRGAPPTLTRLVNTLSEHAEENAQIIPVSVFWGQSPESESSPWKLLFADSWAVTGRLRRLLSILILGRKTRVQFSAPINLRELIEHNKGHERTVRMAQRILRVHFRNLKTAVIGPDLSHRRNLVKGLVNMPLVRQAIADEAEREKITPEKAKAQALRYGNEIASDYTYTAIRFLEVVLSWFWNKIYDGIKVNNIEGVQKVAQGYEVIYVPCHRSHIDYLLLSYLLFKNGLTPPHIAAGINLNMPVIGSLLRRGGAFFMRRTFKGNPLYTSVFNEYLHTLFTKGFPVEYFVEGGRSRTGRMLQPKTGMLAITLRSFLRSSRMPIVFVPVYIGYERVLEGRTYLGELRGASKKKESIFDIFKVVGALKQRFGQVAVNFGEPIKLAEFLDAEQPDWRSQELGPNYKPAWLNETTNRLGEQVARHLNEAAAVNPVNLVALALLSTTRLALDEQAMARQLDLYLALLRRVPYSPHTTLPDGDGLALIKHVKDMDLLSEQSDALGKILYLDEQNAVLMTYYRNNVLHIFALPALLASFFQSSSRMSRDQILRYTHALYPYLQSELFIRWSLDELDTVVDQWLEAFVEQGLLRFENNVYLRPAPSSRHFVLLTLLSKTVAQTLQRFYMAISLLLNSGQNSISAEELEDLCTIMAQRLSILHGLNAPEFFDKSLFRHFIQTLLEQDVLRRDEAGKLSYHDLLGELAEGAAKRVLPAEIRLSIRQVALHRVDGAAEAAVEPQPPKPEESR.

The short motif at 309 to 314 (CHRSHI) is the HXXXXD motif element.

Belongs to the GPAT/DAPAT family.

The protein localises to the cell inner membrane. The enzyme catalyses sn-glycerol 3-phosphate + an acyl-CoA = a 1-acyl-sn-glycero-3-phosphate + CoA. Its pathway is phospholipid metabolism; CDP-diacylglycerol biosynthesis; CDP-diacylglycerol from sn-glycerol 3-phosphate: step 1/3. This chain is Glycerol-3-phosphate acyltransferase, found in Pseudomonas fluorescens (strain SBW25).